The sequence spans 1145 residues: Error-prone DNA polymerase (1145 aa).

The protein belongs to the DNA polymerase type-C family. DnaE2 subfamily.

The protein resides in the cytoplasm. It catalyses the reaction DNA(n) + a 2'-deoxyribonucleoside 5'-triphosphate = DNA(n+1) + diphosphate. Its function is as follows. DNA polymerase involved in damage-induced mutagenesis and translesion synthesis (TLS). It is not the major replicative DNA polymerase. The sequence is that of Error-prone DNA polymerase from Rhodopirellula baltica (strain DSM 10527 / NCIMB 13988 / SH1).